The chain runs to 263 residues: S-methyl-5'-thioadenosine phosphorylase (263 aa).

Residues Thr-13, 55 to 56 (RH), and 88 to 89 (SA) contribute to the phosphate site. A substrate-binding site is contributed by Met-186. Residue Thr-187 participates in phosphate binding. 210-212 (DYD) is a substrate binding site.

It belongs to the PNP/MTAP phosphorylase family. MTAP subfamily. Homohexamer. Dimer of a homotrimer.

It carries out the reaction S-methyl-5'-thioadenosine + phosphate = 5-(methylsulfanyl)-alpha-D-ribose 1-phosphate + adenine. It functions in the pathway amino-acid biosynthesis; L-methionine biosynthesis via salvage pathway; S-methyl-5-thio-alpha-D-ribose 1-phosphate from S-methyl-5'-thioadenosine (phosphorylase route): step 1/1. Catalyzes the reversible phosphorylation of S-methyl-5'-thioadenosine (MTA) to adenine and 5-methylthioribose-1-phosphate. Involved in the breakdown of MTA, a major by-product of polyamine biosynthesis. Responsible for the first step in the methionine salvage pathway after MTA has been generated from S-adenosylmethionine. Has broad substrate specificity with 6-aminopurine nucleosides as preferred substrates. The polypeptide is S-methyl-5'-thioadenosine phosphorylase (Nitrosopumilus maritimus (strain SCM1)).